Reading from the N-terminus, the 492-residue chain is uncharacterized protein (492 aa).

The next 13 membrane-spanning stretches (helical) occupy residues Val-67 to Leu-87, Ala-88 to Gly-108, Ile-110 to Val-130, Gly-157 to Gly-177, Tyr-185 to Leu-205, Ile-232 to Ile-252, Phe-255 to Phe-275, Leu-294 to Val-314, Trp-333 to Trp-353, Phe-367 to Gln-387, Leu-392 to Leu-412, Ser-434 to Phe-454, and Gly-464 to Ile-484.

The protein belongs to the major facilitator superfamily. Proton-dependent oligopeptide transporter (POT/PTR) (TC 2.A.17) family.

The protein resides in the cell membrane. This is an uncharacterized protein from Bacillus subtilis (strain 168).